The following is a 510-amino-acid chain: NAD(P)H-quinone oxidoreductase subunit 2, chloroplastic (510 aa).

11 helical membrane passes run 24 to 44 (LLLFHGSFIFPECILIFGLIL), 59 to 79 (WFYFISSTSLVMSITALLFRW), 99 to 119 (IFQFLILLCSTLCIPLSVEYI), 124 to 144 (MAITEFLLFVLTATLGGMFLC), 149 to 169 (LITIFVAPECFSLCSYLLSGY), 183 to 203 (YLLMGGASSSILVHGFSWLYG), 295 to 315 (WHLLLEILAILSMILGNLIAI), 323 to 343 (MLAYSSIGQIGYVIIGIIVGD), 347 to 367 (GYASMITYMLFYISMNLGTFA), 395 to 415 (ALSSALCLLSLGGLPPLAGFF), and 418 to 438 (LHLFWCGWQAGLYFLVSIGLL).

This sequence belongs to the complex I subunit 2 family. As to quaternary structure, NDH is composed of at least 16 different subunits, 5 of which are encoded in the nucleus.

The protein localises to the plastid. The protein resides in the chloroplast thylakoid membrane. It carries out the reaction a plastoquinone + NADH + (n+1) H(+)(in) = a plastoquinol + NAD(+) + n H(+)(out). The enzyme catalyses a plastoquinone + NADPH + (n+1) H(+)(in) = a plastoquinol + NADP(+) + n H(+)(out). NDH shuttles electrons from NAD(P)H:plastoquinone, via FMN and iron-sulfur (Fe-S) centers, to quinones in the photosynthetic chain and possibly in a chloroplast respiratory chain. The immediate electron acceptor for the enzyme in this species is believed to be plastoquinone. Couples the redox reaction to proton translocation, and thus conserves the redox energy in a proton gradient. In Maianthemum racemosum (False Solomon's-seal), this protein is NAD(P)H-quinone oxidoreductase subunit 2, chloroplastic.